The sequence spans 608 residues: Tyrosyl-DNA phosphodiesterase 1 (608 aa).

The interval 1 to 101 (MSQEGDYGRW…SDDELQPEMP (101 aa)) is disordered. Serine 61 carries the post-translational modification Phosphoserine. The residue at position 147 (threonine 147) is a Phosphothreonine. Serine 148 carries the post-translational modification Phosphoserine. Histidine 263 (nucleophile) is an active-site residue. Lysine 265 contacts substrate. The interaction with DNA stretch occupies residues 400 to 403 (SVGS). The active-site Proton donor/acceptor is histidine 493. Residue lysine 495 coordinates substrate.

It belongs to the tyrosyl-DNA phosphodiesterase family. As to quaternary structure, monomer. In terms of processing, phosphorylated on serine and/or threonine residues, but not on tyrosine residues. Ubiquitously expressed. Similar expression throughout the central nervous system (whole brain, amygdala, caudate nucleus, cerebellum, cerebral cortex, frontal lobe, hippocampus, medulla oblongata, occipital lobe, putamen, substantia nigra, temporal lobe, thalamus, nucleus accumbens and spinal cord) and increased expression in testis and thymus.

The protein localises to the nucleus. It is found in the cytoplasm. Functionally, DNA repair enzyme that can remove a variety of covalent adducts from DNA through hydrolysis of a 3'-phosphodiester bond, giving rise to DNA with a free 3' phosphate. Catalyzes the hydrolysis of dead-end complexes between DNA and the topoisomerase I active site tyrosine residue. Hydrolyzes 3'-phosphoglycolates on protruding 3' ends on DNA double-strand breaks due to DNA damage by radiation and free radicals. Acts on blunt-ended double-strand DNA breaks and on single-stranded DNA. Has low 3'exonuclease activity and can remove a single nucleoside from the 3'end of DNA and RNA molecules with 3'hydroxyl groups. Has no exonuclease activity towards DNA or RNA with a 3'phosphate. The protein is Tyrosyl-DNA phosphodiesterase 1 (TDP1) of Homo sapiens (Human).